A 144-amino-acid chain; its full sequence is Large ribosomal subunit protein uL11 (144 aa).

Belongs to the universal ribosomal protein uL11 family. In terms of assembly, part of the ribosomal stalk of the 50S ribosomal subunit. Interacts with L10 and the large rRNA to form the base of the stalk. L10 forms an elongated spine to which L12 dimers bind in a sequential fashion forming a multimeric L10(L12)X complex. Contacts the CTC protein (RL25). In terms of processing, one or more lysine residues are methylated.

Its function is as follows. Forms part of the ribosomal stalk which helps the ribosome interact with GTP-bound translation factors. This Deinococcus radiodurans (strain ATCC 13939 / DSM 20539 / JCM 16871 / CCUG 27074 / LMG 4051 / NBRC 15346 / NCIMB 9279 / VKM B-1422 / R1) protein is Large ribosomal subunit protein uL11.